A 200-amino-acid polypeptide reads, in one-letter code: WUSCHEL-related homeobox 9 (200 aa).

The homeobox; WUS-type DNA-binding region spans 10–74; it reads VKCGRWNPTA…NHKARERHHH (65 aa). A compositionally biased stretch (basic residues) spans 70-80; the sequence is ERHHHKKRRRG. The tract at residues 70–118 is disordered; sequence ERHHHKKRRRGASSPDSGSNDDDGRAAAHEGDADLVLQPPESKREARSY. Residues 91–101 show a composition bias toward basic and acidic residues; the sequence is DDGRAAAHEGD.

It belongs to the WUS homeobox family. Specifically expressed in the central cells of the quiescent center (QC) of the root.

Its subcellular location is the nucleus. In terms of biological role, transcription factor which may be involved in the specification and maintenance of the stem cells (QC cells) in the root apical meristem (RAM). The protein is WUSCHEL-related homeobox 9 (WOX9) of Oryza sativa subsp. japonica (Rice).